Reading from the N-terminus, the 366-residue chain is Beta sliding clamp (366 aa).

The protein belongs to the beta sliding clamp family. In terms of assembly, forms a ring-shaped head-to-tail homodimer around DNA which binds and tethers DNA polymerases and other proteins to the DNA. The DNA replisome complex has a single clamp-loading complex (3 tau and 1 each of delta, delta', psi and chi subunits) which binds 3 Pol III cores (1 core on the leading strand and 2 on the lagging strand) each with a beta sliding clamp dimer. Additional proteins in the replisome are other copies of gamma, psi and chi, Ssb, DNA helicase and RNA primase.

The protein localises to the cytoplasm. Confers DNA tethering and processivity to DNA polymerases and other proteins. Acts as a clamp, forming a ring around DNA (a reaction catalyzed by the clamp-loading complex) which diffuses in an ATP-independent manner freely and bidirectionally along dsDNA. Initially characterized for its ability to contact the catalytic subunit of DNA polymerase III (Pol III), a complex, multichain enzyme responsible for most of the replicative synthesis in bacteria; Pol III exhibits 3'-5' exonuclease proofreading activity. The beta chain is required for initiation of replication as well as for processivity of DNA replication. The polypeptide is Beta sliding clamp (dnaN) (Vibrio cholerae serotype O1 (strain ATCC 39315 / El Tor Inaba N16961)).